Here is a 173-residue protein sequence, read N- to C-terminus: Crossover junction endodeoxyribonuclease RuvC (173 aa).

Active-site residues include Asp-8, Glu-67, and Asp-139. Mg(2+) is bound by residues Asp-8, Glu-67, and Asp-139.

Belongs to the RuvC family. Homodimer which binds Holliday junction (HJ) DNA. The HJ becomes 2-fold symmetrical on binding to RuvC with unstacked arms; it has a different conformation from HJ DNA in complex with RuvA. In the full resolvosome a probable DNA-RuvA(4)-RuvB(12)-RuvC(2) complex forms which resolves the HJ. It depends on Mg(2+) as a cofactor.

The protein localises to the cytoplasm. It catalyses the reaction Endonucleolytic cleavage at a junction such as a reciprocal single-stranded crossover between two homologous DNA duplexes (Holliday junction).. In terms of biological role, the RuvA-RuvB-RuvC complex processes Holliday junction (HJ) DNA during genetic recombination and DNA repair. Endonuclease that resolves HJ intermediates. Cleaves cruciform DNA by making single-stranded nicks across the HJ at symmetrical positions within the homologous arms, yielding a 5'-phosphate and a 3'-hydroxyl group; requires a central core of homology in the junction. The consensus cleavage sequence is 5'-(A/T)TT(C/G)-3'. Cleavage occurs on the 3'-side of the TT dinucleotide at the point of strand exchange. HJ branch migration catalyzed by RuvA-RuvB allows RuvC to scan DNA until it finds its consensus sequence, where it cleaves and resolves the cruciform DNA. The protein is Crossover junction endodeoxyribonuclease RuvC of Shewanella pealeana (strain ATCC 700345 / ANG-SQ1).